The following is a 334-amino-acid chain: DNA-directed RNA polymerase subunit alpha (334 aa).

Residues 1–234 (MQRSVHELLT…QQLAVFVDFD (234 aa)) are alpha N-terminal domain (alpha-NTD). An alpha C-terminal domain (alpha-CTD) region spans residues 248–334 (IDPILLRPVD…LRGDDRVLGG (87 aa)).

It belongs to the RNA polymerase alpha chain family. Homodimer. The RNAP catalytic core consists of 2 alpha, 1 beta, 1 beta' and 1 omega subunit. When a sigma factor is associated with the core the holoenzyme is formed, which can initiate transcription.

It catalyses the reaction RNA(n) + a ribonucleoside 5'-triphosphate = RNA(n+1) + diphosphate. DNA-dependent RNA polymerase catalyzes the transcription of DNA into RNA using the four ribonucleoside triphosphates as substrates. The sequence is that of DNA-directed RNA polymerase subunit alpha from Marinobacter nauticus (strain ATCC 700491 / DSM 11845 / VT8) (Marinobacter aquaeolei).